Here is an 804-residue protein sequence, read N- to C-terminus: uncharacterized protein (804 aa).

This is an uncharacterized protein from Methanothermobacter marburgensis (strain ATCC BAA-927 / DSM 2133 / JCM 14651 / NBRC 100331 / OCM 82 / Marburg) (Methanobacterium thermoautotrophicum).